We begin with the raw amino-acid sequence, 1157 residues long: Peroxisomal ATPase PEX1 (1157 aa).

Disordered regions lie at residues 187–221 (SISSVRSDSSGHRIRRVRSSTSTATGRRSVTNNGE) and 1135–1157 (SGRDGNMPDGTASNEIGARSTLM). Residues 205–217 (SSTSTATGRRSVT) are compositionally biased toward low complexity.

This sequence belongs to the AAA ATPase family. Interacts with PEX6; forming the PEX1-PEX6 AAA ATPase complex, which is composed of a heterohexamer formed by a trimer of PEX1-PEX6 dimers.

It localises to the membrane. The catalysed reaction is ATP + H2O = ADP + phosphate + H(+). Functionally, component of the PEX1-PEX6 AAA ATPase complex involved in peroxisome biosynthesis. The complex acts as a protein dislocase complex that mediates the ATP-dependent extraction of the PEX5 receptor from peroxisomal membranes, an essential step for PEX5 recycling. Specifically recognizes PEX5 monoubiquitinated at 'Cys-6', and pulls it out of the peroxisome lumen through the PEX2-PEX10-PEX12 retrotranslocation channel. Extraction by the PEX1-PEX6 AAA ATPase complex is accompanied by unfolding of the TPR repeats and release of bound cargo from PEX5. The protein is Peroxisomal ATPase PEX1 of Komagataella pastoris (Yeast).